The following is a 423-amino-acid chain: 3-phosphoshikimate 1-carboxyvinyltransferase (423 aa).

3 residues coordinate 3-phosphoshikimate: Lys-20, Ser-21, and Arg-25. Lys-20 is a binding site for phosphoenolpyruvate. Phosphoenolpyruvate contacts are provided by Gly-91 and Arg-119. The 3-phosphoshikimate site is built by Thr-163, Ser-164, Gln-165, Asp-305, Gln-328, and Lys-332. Gln-165 is a binding site for phosphoenolpyruvate. Residue Asp-305 is the Proton acceptor of the active site. Phosphoenolpyruvate is bound by residues Arg-336 and Arg-377.

It belongs to the EPSP synthase family. Monomer.

It is found in the cytoplasm. It catalyses the reaction 3-phosphoshikimate + phosphoenolpyruvate = 5-O-(1-carboxyvinyl)-3-phosphoshikimate + phosphate. It participates in metabolic intermediate biosynthesis; chorismate biosynthesis; chorismate from D-erythrose 4-phosphate and phosphoenolpyruvate: step 6/7. Its function is as follows. Catalyzes the transfer of the enolpyruvyl moiety of phosphoenolpyruvate (PEP) to the 5-hydroxyl of shikimate-3-phosphate (S3P) to produce enolpyruvyl shikimate-3-phosphate and inorganic phosphate. This chain is 3-phosphoshikimate 1-carboxyvinyltransferase, found in Acetivibrio thermocellus (strain ATCC 27405 / DSM 1237 / JCM 9322 / NBRC 103400 / NCIMB 10682 / NRRL B-4536 / VPI 7372) (Clostridium thermocellum).